A 246-amino-acid polypeptide reads, in one-letter code: Small ribosomal subunit protein uS2 (246 aa).

It belongs to the universal ribosomal protein uS2 family.

This is Small ribosomal subunit protein uS2 from Azotobacter vinelandii (strain DJ / ATCC BAA-1303).